The sequence spans 536 residues: MTRRGVLSRIASGIILAWGWKRAVIALLAGALSSLAMEPFNAWPVLFITFPIAVWLIDGSAAGKRRGVPAAAMAGWWFGFGYFVPGLYWIGYAFLVDADTFAWLLPAAICGLPAYLALFTALGFALARLLWRPDSLRILSLAVSLTISEWLRGHLLTGFPWNAFGYALTEPLVLAQSISVIGIWGLTLLTVAIFASPAVLIDGGTNTRRRWAVPAMALGVLAAMTVFGGIRLKLSPTQLVDNVRLRIMQPNLPQDARFNYSAKADVMQKYLSLSDRSTGPKSTGVRDVSLLIWPESAFPFFLSREADAMAQIAELLPKGTVLLTGAVRPPELPPGRRITRAYNSIYAIDHDGSILSVYDKLHLVPFGEFLPYQNLMEKIGFVQLTKVQGGFLSGVARHNLELPNAPPLLPLICYEAIFPDEIAIGNNRPGWMLNLTNDGWFGISSGPYQHLQQARMRAIEQGLPLVRAANTGVSAVIDPVGRIVAELGLGVEGVLDSGLPAPVAPTIYARVGELPAAVLVALVMMLVLLRKRPPGS.

A run of 7 helical transmembrane segments spans residues 10-30 (IASG…LLAG), 42-62 (AWPV…GSAA), 76-96 (WWFG…AFLV), 107-127 (AAIC…FALA), 136-158 (LRIL…LLTG), 181-201 (IGIW…AVLI), and 212-232 (AVPA…GIRL). The 254-residue stretch at 248 to 501 (MQPNLPQDAR…EGVLDSGLPA (254 aa)) folds into the CN hydrolase domain. E295 serves as the catalytic Proton acceptor. K360 is an active-site residue. The active-site Nucleophile is the C413. Residues 509-529 (ARVGELPAAVLVALVMMLVLL) traverse the membrane as a helical segment.

The protein belongs to the CN hydrolase family. Apolipoprotein N-acyltransferase subfamily.

Its subcellular location is the cell inner membrane. It carries out the reaction N-terminal S-1,2-diacyl-sn-glyceryl-L-cysteinyl-[lipoprotein] + a glycerophospholipid = N-acyl-S-1,2-diacyl-sn-glyceryl-L-cysteinyl-[lipoprotein] + a 2-acyl-sn-glycero-3-phospholipid + H(+). It participates in protein modification; lipoprotein biosynthesis (N-acyl transfer). In terms of biological role, catalyzes the phospholipid dependent N-acylation of the N-terminal cysteine of apolipoprotein, the last step in lipoprotein maturation. This chain is Apolipoprotein N-acyltransferase, found in Rhodopseudomonas palustris (strain ATCC BAA-98 / CGA009).